The following is a 252-amino-acid chain: Triosephosphate isomerase (252 aa).

Position 11–13 (11–13 (NWK)) interacts with substrate. The active-site Electrophile is the histidine 97. Residue glutamate 169 is the Proton acceptor of the active site. Substrate contacts are provided by residues glycine 175, serine 215, and 236–237 (GG).

It belongs to the triosephosphate isomerase family. Homodimer.

It localises to the cytoplasm. The enzyme catalyses D-glyceraldehyde 3-phosphate = dihydroxyacetone phosphate. It functions in the pathway carbohydrate biosynthesis; gluconeogenesis. It participates in carbohydrate degradation; glycolysis; D-glyceraldehyde 3-phosphate from glycerone phosphate: step 1/1. Functionally, involved in the gluconeogenesis. Catalyzes stereospecifically the conversion of dihydroxyacetone phosphate (DHAP) to D-glyceraldehyde-3-phosphate (G3P). The sequence is that of Triosephosphate isomerase from Mycoplasmoides gallisepticum (strain R(low / passage 15 / clone 2)) (Mycoplasma gallisepticum).